We begin with the raw amino-acid sequence, 1241 residues long: ATP-dependent helicase/nuclease subunit A (1241 aa).

The 474-residue stretch at 12–485 (SQWTDDQWKA…IDLAKNFRSR (474 aa)) folds into the UvrD-like helicase ATP-binding domain. Position 33-40 (33-40 (AAAGSGKT)) interacts with ATP. Residues 505-805 (GEIDYDADAE…RIMTIHKSKG (301 aa)) enclose the UvrD-like helicase C-terminal domain.

Belongs to the helicase family. AddA subfamily. As to quaternary structure, heterodimer of AddA and AddB/RexB. Requires Mg(2+) as cofactor.

The enzyme catalyses Couples ATP hydrolysis with the unwinding of duplex DNA by translocating in the 3'-5' direction.. It catalyses the reaction ATP + H2O = ADP + phosphate + H(+). Functionally, the heterodimer acts as both an ATP-dependent DNA helicase and an ATP-dependent, dual-direction single-stranded exonuclease. Recognizes the chi site generating a DNA molecule suitable for the initiation of homologous recombination. The AddA nuclease domain is required for chi fragment generation; this subunit has the helicase and 3' -&gt; 5' nuclease activities. The polypeptide is ATP-dependent helicase/nuclease subunit A (Bacillus cereus (strain ATCC 14579 / DSM 31 / CCUG 7414 / JCM 2152 / NBRC 15305 / NCIMB 9373 / NCTC 2599 / NRRL B-3711)).